A 305-amino-acid polypeptide reads, in one-letter code: Dihydroorotate dehydrogenase B (NAD(+)), catalytic subunit (305 aa).

FMN contacts are provided by residues S20 and 44-45 (KG). Substrate-binding positions include K44 and 68–72 (NAIGI). FMN is bound by residues N98 and N126. N126 contributes to the substrate binding site. The active-site Nucleophile is the C129. FMN is bound by residues K165 and I191. 192–193 (NT) provides a ligand contact to substrate. FMN is bound by residues G217, 243–244 (GG), and 265–266 (GT).

The protein belongs to the dihydroorotate dehydrogenase family. Type 1 subfamily. Heterotetramer of 2 PyrK and 2 PyrD type B subunits. FMN serves as cofactor.

Its subcellular location is the cytoplasm. It catalyses the reaction (S)-dihydroorotate + NAD(+) = orotate + NADH + H(+). It functions in the pathway pyrimidine metabolism; UMP biosynthesis via de novo pathway; orotate from (S)-dihydroorotate (NAD(+) route): step 1/1. Functionally, catalyzes the conversion of dihydroorotate to orotate with NAD(+) as electron acceptor. This chain is Dihydroorotate dehydrogenase B (NAD(+)), catalytic subunit (pyrD), found in Maridesulfovibrio salexigens (strain ATCC 14822 / DSM 2638 / NCIMB 8403 / VKM B-1763) (Desulfovibrio salexigens).